The following is a 150-amino-acid chain: Large ribosomal subunit protein eL19 (150 aa).

Positions 59–89 (SRYRARIRHEQKKKGRHRGPGSRKGKKTARM) are disordered. Over residues 61–89 (YRARIRHEQKKKGRHRGPGSRKGKKTARM) the composition is skewed to basic residues.

Belongs to the eukaryotic ribosomal protein eL19 family. Part of the 50S ribosomal subunit.

Binds to the 23S rRNA. The sequence is that of Large ribosomal subunit protein eL19 from Pyrococcus horikoshii (strain ATCC 700860 / DSM 12428 / JCM 9974 / NBRC 100139 / OT-3).